A 319-amino-acid chain; its full sequence is MAFMSMERSTWAFTFGILGNLISLMVFLSPLPTFYRVYRKKSTEGFQSTPYVVTLFSCMLWMYYAFVKSGAELLVTINGVGCVIETVYLAMYLAYAPKSARMLTAKMLLGLNIGLFGVIALVTLLLSRGELRVHVLGWICVAVSLSVFAAPLSIIRLVIRTKSVEFMPFSLSFFLVLSAVIWFLYGLLKKDVFVALPNVLGFVFGVAQMALYMAYRSKKPLVASSSSAAVAAGLETKLPEHVKEVQAVAKGAVAAAPEGRISCGAEVHPIDDVMPSEVVEVKVDDEETNRTDEMAGDGDHAMVRTEQIIKPDMAIVVEV.

Residues 1-10 (MAFMSMERST) lie on the Extracellular side of the membrane. The helical transmembrane segment at 11 to 31 (WAFTFGILGNLISLMVFLSPL) threads the bilayer. Residues 13–99 (FTFGILGNLI…AMYLAYAPKS (87 aa)) form the MtN3/slv 1 domain. The Cytoplasmic segment spans residues 32–50 (PTFYRVYRKKSTEGFQSTP). A helical transmembrane segment spans residues 51–71 (YVVTLFSCMLWMYYAFVKSGA). Position 72 (Glu72) is a topological domain, extracellular. Residues 73–93 (LLVTINGVGCVIETVYLAMYL) traverse the membrane as a helical segment. Topologically, residues 94 to 106 (AYAPKSARMLTAK) are cytoplasmic. The helical transmembrane segment at 107–127 (MLLGLNIGLFGVIALVTLLLS) threads the bilayer. Residues 128-134 (RGELRVH) lie on the Extracellular side of the membrane. A helical membrane pass occupies residues 135–155 (VLGWICVAVSLSVFAAPLSII). The MtN3/slv 2 domain occupies 135–219 (VLGWICVAVS…ALYMAYRSKK (85 aa)). The Cytoplasmic segment spans residues 156–167 (RLVIRTKSVEFM). A helical membrane pass occupies residues 168-188 (PFSLSFFLVLSAVIWFLYGLL). Residues 189–191 (KKD) lie on the Extracellular side of the membrane. Residues 192–212 (VFVALPNVLGFVFGVAQMALY) traverse the membrane as a helical segment. Topologically, residues 213 to 319 (MAYRSKKPLV…KPDMAIVVEV (107 aa)) are cytoplasmic.

The protein belongs to the SWEET sugar transporter family. Forms homooligomers and/or heterooligomers.

It is found in the cell membrane. Mediates both low-affinity uptake and efflux of sugar across the plasma membrane. This is Bidirectional sugar transporter SWEET15 (SWEET15) from Oryza sativa subsp. indica (Rice).